Reading from the N-terminus, the 262-residue chain is S-methyl-5'-thioadenosine phosphorylase (262 aa).

Phosphate-binding positions include serine 12, 54 to 55, and 87 to 88; these read RH and SA. Methionine 185 serves as a coordination point for substrate. A phosphate-binding site is contributed by threonine 186. Substrate is bound at residue 209–211; that stretch reads DYD.

This sequence belongs to the PNP/MTAP phosphorylase family. MTAP subfamily. In terms of assembly, homohexamer. Dimer of a homotrimer.

The catalysed reaction is S-methyl-5'-thioadenosine + phosphate = 5-(methylsulfanyl)-alpha-D-ribose 1-phosphate + adenine. Its pathway is amino-acid biosynthesis; L-methionine biosynthesis via salvage pathway; S-methyl-5-thio-alpha-D-ribose 1-phosphate from S-methyl-5'-thioadenosine (phosphorylase route): step 1/1. Its function is as follows. Catalyzes the reversible phosphorylation of S-methyl-5'-thioadenosine (MTA) to adenine and 5-methylthioribose-1-phosphate. Involved in the breakdown of MTA, a major by-product of polyamine biosynthesis. Responsible for the first step in the methionine salvage pathway after MTA has been generated from S-adenosylmethionine. Has broad substrate specificity with 6-aminopurine nucleosides as preferred substrates. The sequence is that of S-methyl-5'-thioadenosine phosphorylase from Thermofilum pendens (strain DSM 2475 / Hrk 5).